A 103-amino-acid polypeptide reads, in one-letter code: Ubiquitin-related modifier 1 (103 aa).

At Gly103 the chain carries 1-thioglycine. Residue Gly103 forms a Glycyl lysine isopeptide (Gly-Lys) (interchain with K-? in acceptor proteins) linkage.

It belongs to the URM1 family. Post-translationally, C-terminal thiocarboxylation occurs in 2 steps, it is first acyl-adenylated (-COAMP) via the hesA/moeB/thiF part of UBA4, then thiocarboxylated (-COSH) via the rhodanese domain of UBA4.

It is found in the cytoplasm. The protein operates within tRNA modification; 5-methoxycarbonylmethyl-2-thiouridine-tRNA biosynthesis. Its function is as follows. Acts as a sulfur carrier required for 2-thiolation of mcm(5)S(2)U at tRNA wobble positions of cytosolic tRNA(Lys), tRNA(Glu) and tRNA(Gln). Serves as sulfur donor in tRNA 2-thiolation reaction by being thiocarboxylated (-COSH) at its C-terminus by the MOCS3 homolog UBA4. The sulfur is then transferred to tRNA to form 2-thiolation of mcm(5)S(2)U. Prior mcm(5) tRNA modification by the elongator complex is required for 2-thiolation. Also acts as a ubiquitin-like protein (UBL) that is covalently conjugated via an isopeptide bond to lysine residues of target proteins such as AHP1. The thiocarboxylated form serves as substrate for conjugation and oxidative stress specifically induces the formation of UBL-protein conjugates. The sequence is that of Ubiquitin-related modifier 1 from Vanderwaltozyma polyspora (strain ATCC 22028 / DSM 70294 / BCRC 21397 / CBS 2163 / NBRC 10782 / NRRL Y-8283 / UCD 57-17) (Kluyveromyces polysporus).